The primary structure comprises 1104 residues: MTSSGKVRIYELSKDLGLENKDVLDAAEKLSIAAKSHSSSISDAEAGKIRSLLGKGGNGAKPAAAAPAKPAPGKAILSVKKAAPATPSKPTPAVSKPVAKPVAAKPVVTKPAAAVKPQAAPKPPAAATPKPVISKPAPALVKAAAAPARPTAAKPVPRPAAAKPQVVSKPAAGKPKLVSKPKATAKPTAPTPRPTPARPTPRPAGAGSPARPTPGQGQPKPQIIRSGAPSRPGAPTRAGAPAKPGAPSRPTPRPELVGKPVPRRPAGTGVPQRQGGPSRPGAPTRQGRPGMPPRSGNTLELVGKPIRRDGSTTGSGRPGAPTRPGAPGRPGMPAGMRKPVAPGELMQLQKPVGRPAAPAPRRPDAPTKAGAGAGTATPPVARPNSPSAPRRPSFRPGGPGGQRRPGRPDWDDSARLDALRSRSPQKQRQKVHIIGENDDSLAAQTGGFAGEQENMVLSASLARPAKPKSQQRTAPKPVAAMRKRKKETARQRQRRRAMELRAAREAKQVRPEMIVVPEDNLTVQELADMLSVESSEIIKSLFFKGIIATVTQTLDMPTIEAVADEFGVPVLQDDVEEAAKKTVEMIEEADKAHLIRRPPVVTVMGHVDHGKTSLLDAIRQARVAAGEAGGITQHIGAYQVEIEHNNEQRKLTFLDTPGHEAFTAMRARGTKVTDVAVLVVAADDGVRPQTLEAISHARAAEVPIVVAINKIDKEGSSPERVKQELSEQNLLAEDWGGDVVMVPVSAIKGENIDKLLEMLLLVTEVEDLQANPDRLARGTVIEAHLDKAKGPVATLLVQNGTLKTGDVLAAGPVLGKVRAMVDDNRQRLKQAGPSFAVEALGFSEVPTAGDEFEVYPDEKSARAVVGDRASDARATRLAQQMASRRVSLTAMSGQANDGELKELNLILKADVQGSVEAILGSLEQLPKDEVQVRVLLSAPGEITETDVDLAAASGAVIVGFNTSMASGAKKAADATGVDVRDYDVIYKLLEDIQMAMEGLLEPELVEEALGEAEVRAVFTIGKSAVAGCYVTTGKLHRNCRVRVHRGKQVVYEGDLDSLRRNKDDVKEVATGFECGVGTDRFANWEEGDRIEAFKMVTQRRKLTT.

Disordered stretches follow at residues 51–444 (SLLG…LAAQ) and 461–497 (LARP…RRRA). Composition is skewed to low complexity over residues 60 to 119 (AKPA…KPQA) and 127 to 164 (ATPK…AAKP). Residues 189 to 202 (APTPRPTPARPTPR) show a composition bias toward pro residues. Low complexity-rich tracts occupy residues 203 to 215 (PAGA…PTPG), 227 to 246 (GAPS…KPGA), 311 to 336 (STTG…PAGM), and 366 to 396 (PTKA…SFRP). Residues 406-420 (GRPDWDDSARLDALR) are compositionally biased toward basic and acidic residues. The span at 481 to 495 (MRKRKKETARQRQRR) shows a compositional bias: basic residues. A tr-type G domain is found at 596-768 (RRPPVVTVMG…LLLVTEVEDL (173 aa)). The interval 605–612 (GHVDHGKT) is G1. 605–612 (GHVDHGKT) contacts GTP. The tract at residues 630-634 (GITQH) is G2. The segment at 655–658 (DTPG) is G3. Residues 655 to 659 (DTPGH) and 709 to 712 (NKID) contribute to the GTP site. The segment at 709-712 (NKID) is G4. The segment at 745–747 (SAI) is G5.

Belongs to the TRAFAC class translation factor GTPase superfamily. Classic translation factor GTPase family. IF-2 subfamily.

It is found in the cytoplasm. Its function is as follows. One of the essential components for the initiation of protein synthesis. Protects formylmethionyl-tRNA from spontaneous hydrolysis and promotes its binding to the 30S ribosomal subunits. Also involved in the hydrolysis of GTP during the formation of the 70S ribosomal complex. The protein is Translation initiation factor IF-2 of Synechococcus sp. (strain CC9605).